Reading from the N-terminus, the 462-residue chain is Na(+)/H(+) antiporter NhaA 2 (462 aa).

The tract at residues 1–31 (MKSSTREQTPVTSPTPHDPTPPTPPRGSTPL) is disordered. Residues 16–27 (PHDPTPPTPPRG) show a composition bias toward pro residues. 11 helical membrane passes run 52–72 (IGGA…NSPW), 96–116 (LTLG…IAGL), 134–154 (LVPV…YVLV), 165–185 (GWAI…AVIS), 195–215 (FLLT…AIFY), 218–238 (TLAV…GLLV), 244–264 (SWWL…ASGI), 309–329 (FAVP…LSGL), 337–357 (VALG…LGAT), 382–402 (LLGG…FGAG), and 408–428 (HVKV…AVVL).

It belongs to the NhaA Na(+)/H(+) (TC 2.A.33) antiporter family.

It localises to the cell membrane. The catalysed reaction is Na(+)(in) + 2 H(+)(out) = Na(+)(out) + 2 H(+)(in). Na(+)/H(+) antiporter that extrudes sodium in exchange for external protons. In Kineococcus radiotolerans (strain ATCC BAA-149 / DSM 14245 / SRS30216), this protein is Na(+)/H(+) antiporter NhaA 2.